The following is a 334-amino-acid chain: Nucleoid-associated protein YPN_2714 (334 aa).

It belongs to the YejK family.

Its subcellular location is the cytoplasm. The protein resides in the nucleoid. The protein is Nucleoid-associated protein YPN_2714 of Yersinia pestis bv. Antiqua (strain Nepal516).